Here is a 361-residue protein sequence, read N- to C-terminus: Epi-isozizaene synthase (361 aa).

Positions 99, 103, 240, 244, and 248 each coordinate Mg(2+). Positions 99–103 (DDRHD) match the DDXXD motif motif.

Belongs to the terpene synthase family. Requires Mg(2+) as cofactor. Mn(2+) is required as a cofactor. The cofactor is Fe(3+).

It catalyses the reaction (2E,6E)-farnesyl diphosphate = (+)-epi-isozizaene + diphosphate. It functions in the pathway sesquiterpene biosynthesis; epi-isozizaene biosynthesis. Functionally, catalyzes the cyclization of farnesyl diphosphate (FPP) to the sesquiterpene epi-isozizaene. The polypeptide is Epi-isozizaene synthase (cyc1) (Streptomyces coelicolor (strain ATCC BAA-471 / A3(2) / M145)).